A 415-amino-acid chain; its full sequence is [Pyruvate dehydrogenase (acetyl-transferring)] kinase isozyme 3, mitochondrial (415 aa).

A Histidine kinase domain is found at 131 to 362; it reads IEYKEKFGFD…DAVIYLKALS (232 aa). 247-254 serves as a coordination point for ATP; the sequence is ELFKNSMR. N6-succinyllysine is present on lysine 278. Residues aspartate 287, 306–307, and 323–328 each bind ATP; these read ST and GFGYGL. The segment at 383 to 415 is disordered; it reads TPEADDWSNPSSEPRDASKYKAKQDKIKSNRTF. A compositionally biased stretch (basic and acidic residues) spans 395 to 415; it reads EPRDASKYKAKQDKIKSNRTF.

The protein belongs to the PDK/BCKDK protein kinase family. Homodimer. Interacts with the pyruvate dehydrogenase complex subunit DLAT, and is part of the multimeric pyruvate dehydrogenase complex that contains multiple copies of pyruvate dehydrogenase (E1), dihydrolipoamide acetyltransferase (DLAT, E2) and lipoamide dehydrogenase (DLD, E3).

Its subcellular location is the mitochondrion matrix. It catalyses the reaction L-seryl-[pyruvate dehydrogenase E1 alpha subunit] + ATP = O-phospho-L-seryl-[pyruvate dehydrogenase E1 alpha subunit] + ADP + H(+). Inhibits pyruvate dehydrogenase activity by phosphorylation of the E1 subunit PDHA1, and thereby regulates glucose metabolism and aerobic respiration. Can also phosphorylate PDHA2. Decreases glucose utilization and increases fat metabolism in response to prolonged fasting, and as adaptation to a high-fat diet. Plays a role in glucose homeostasis and in maintaining normal blood glucose levels in function of nutrient levels and under starvation. Plays a role in the generation of reactive oxygen species. The polypeptide is [Pyruvate dehydrogenase (acetyl-transferring)] kinase isozyme 3, mitochondrial (Pdk3) (Mus musculus (Mouse)).